We begin with the raw amino-acid sequence, 300 residues long: Regulatory protein NocR (300 aa).

An HTH lysR-type domain is found at 1–59; the sequence is MIQSRQLEAFRPVMLTGGMTSAANLVRITQPAISRLIRDLEEEIGISLFERTGNRLRPT. The H-T-H motif DNA-binding region spans 19-38; that stretch reads MTSAANLVRITQPAISRLIR.

It belongs to the LysR transcriptional regulatory family.

Functionally, positive regulatory protein for the noc operon involved in nopaline catabolism and uptake. This is Regulatory protein NocR (nocR) from Agrobacterium tumefaciens (strain T37).